We begin with the raw amino-acid sequence, 92 residues long: Small ribosomal subunit protein uS19 (92 aa).

It belongs to the universal ribosomal protein uS19 family.

In terms of biological role, protein S19 forms a complex with S13 that binds strongly to the 16S ribosomal RNA. In Photobacterium profundum (strain SS9), this protein is Small ribosomal subunit protein uS19.